Here is a 691-residue protein sequence, read N- to C-terminus: MARTQAEPPASQPDARAAWLRDQLERANYAYYVLDQPDLPDAEYDRLFRELQQLETDHPELVTPDSPTQRVGGEAAGGFTPVVHDAPMLSLNNGFADEDIVAFDKRVADALAKTTDLAGSVTDPVEYACELKFDGLAISLRYEQGVFVQAATRGDGTTGEDVTENVRTIRSIPLKLKGKHVPAVLDVRGEVLMFKRDFARLNERQRAAEQREFANPRNAAAGSLRQLDSKITAQRPLSFFAYGIGVLDGMPMPDTHSALLDWYESLGLPVNRERAVVHGAEGLLDFFRKVGEKRESLPYDIDGVVYKVNRRDEQERLGFVSRAPRFALAHKFPAQEALTKLVAIDVQVGRTGAITPVARLEPVFVGGATVTNATLHNEDEVRRKDIRIGDTVIVRRAGDVIPEVVGALLDRRPADAAEFVMPTECPVCGSKIERLPDEAIARCTGGLFCPAQRKQALWHFAQRRALDIDGLGEKIIDQLVELNLVRTPADLFNLGFATLAELDRFAEKSAQNLIDSLEKAKHTTLARFIYGLGIRHVGESTAKDLAKHFGSLTPIMDASIEELLEVNDVGPIVAESLHQFFAEEHNRTVIEQLRAPGKVTWPEGPPAPKAPQGVLAGKTVVLTGTLPNLTRDAAKEMLEAAGAKVAGSVSKKTDYVVAGAEAGSKLAKAEELGIPVLDEDGLHQLLEGNTP.

Residues 41-45 (DAEYD), 90-91 (SL), and glutamate 130 each bind NAD(+). Catalysis depends on lysine 132, which acts as the N6-AMP-lysine intermediate. Positions 153, 190, 307, and 331 each coordinate NAD(+). Zn(2+) is bound by residues cysteine 425, cysteine 428, cysteine 443, and cysteine 449. Positions 610–691 (APQGVLAGKT…LHQLLEGNTP (82 aa)) constitute a BRCT domain.

The protein belongs to the NAD-dependent DNA ligase family. LigA subfamily. The cofactor is Mg(2+). Requires Mn(2+) as cofactor.

It carries out the reaction NAD(+) + (deoxyribonucleotide)n-3'-hydroxyl + 5'-phospho-(deoxyribonucleotide)m = (deoxyribonucleotide)n+m + AMP + beta-nicotinamide D-nucleotide.. In terms of biological role, DNA ligase that catalyzes the formation of phosphodiester linkages between 5'-phosphoryl and 3'-hydroxyl groups in double-stranded DNA using NAD as a coenzyme and as the energy source for the reaction. It is essential for DNA replication and repair of damaged DNA. This Burkholderia cenocepacia (strain HI2424) protein is DNA ligase.